The sequence spans 564 residues: E3 ubiquitin-protein ligase RNF168 (564 aa).

The RING-type zinc-finger motif lies at 16-55 (CGICMEILVEPVTLPCNHTLCNPCFQSTVEKANLCCPFCR). Position 70 is a phosphoserine (Ser-70). The LR motif 1 motif lies at 110–128 (LSKPGELRREYEEEISKVE). A Phosphoserine modification is found at Ser-134. Residues 143–151 (EEYIQRLLA) carry the UMI motif motif. Disordered stretches follow at residues 149-179 (LLAE…EELA) and 193-291 (NILA…QGPE). Basic and acidic residues predominate over residues 157-179 (EKRRTERRRSEMEEQLRGDEELA). An MIU motif 1 motif is present at residues 168-191 (MEEQLRGDEELARRLSTSINSNYE). Ser-197 is subject to Phosphoserine. Lys-210 is covalently cross-linked (Glycyl lysine isopeptide (Lys-Gly) (interchain with G-Cter in SUMO2)). The segment covering 242-259 (KTEHGEDMCKSKETDSSD) has biased composition (basic and acidic residues). Residues 275-288 (PTHSPQTCPETQGQ) are compositionally biased toward polar residues. A phosphothreonine mark is found at Thr-348 and Thr-361. Phosphoserine occurs at positions 413 and 414. Positions 438 to 461 (RHKQEEQDRLLALQLQKEADKEKM) match the MIU motif 2 motif. A disordered region spans residues 455–564 (EADKEKMVPN…QKSILQMFQR (110 aa)). An LR motif 2 motif is present at residues 465-476 (RQKGSPDQYQLR). Residues 466-480 (QKGSPDQYQLRTSSP) show a composition bias toward polar residues. Ser-469 bears the Phosphoserine mark. Basic and acidic residues predominate over residues 491-515 (NVKDRNSPKQTADRSKSQRSRKGEY). Composition is skewed to polar residues over residues 519–531 (FEST…NGTK) and 555–564 (QKSILQMFQR). Residue Lys-524 forms a Glycyl lysine isopeptide (Lys-Gly) (interchain with G-Cter in SUMO2) linkage.

It belongs to the RNF168 family. As to quaternary structure, monomer. Interacts with UBE2N/UBC13. Post-translationally, sumoylated with SUMO1 by PIAS4 in response to double-strand breaks (DSBs). Ubiquitinated.

It localises to the nucleus. It carries out the reaction S-ubiquitinyl-[E2 ubiquitin-conjugating enzyme]-L-cysteine + [acceptor protein]-L-lysine = [E2 ubiquitin-conjugating enzyme]-L-cysteine + N(6)-ubiquitinyl-[acceptor protein]-L-lysine.. The protein operates within protein modification; protein ubiquitination. Its function is as follows. E3 ubiquitin-protein ligase required for accumulation of repair proteins to sites of DNA damage. Acts with UBE2N/UBC13 to amplify the RNF8-dependent histone ubiquitination. Recruited to sites of DNA damage at double-strand breaks (DSBs) by binding to ubiquitinated histone H2A and H2AX and amplifies the RNF8-dependent H2A ubiquitination, promoting the formation of 'Lys-63'-linked ubiquitin conjugates. This leads to concentrate ubiquitinated histones H2A and H2AX at DNA lesions to the threshold required for recruitment of TP53BP1 and BRCA1. Also recruited at DNA interstrand cross-links (ICLs) sites and promotes accumulation of 'Lys-63'-linked ubiquitination of histones H2A and H2AX, leading to recruitment of FAAP20 and Fanconi anemia (FA) complex, followed by interstrand cross-link repair. H2A ubiquitination also mediates the ATM-dependent transcriptional silencing at regions flanking DSBs in cis, a mechanism to avoid collision between transcription and repair intermediates. Also involved in class switch recombination in immune system, via its role in regulation of DSBs repair. Following DNA damage, promotes the ubiquitination and degradation of JMJD2A/KDM4A in collaboration with RNF8, leading to unmask H4K20me2 mark and promote the recruitment of TP53BP1 at DNA damage sites. Not able to initiate 'Lys-63'-linked ubiquitination in vitro; possibly due to partial occlusion of the UBE2N/UBC13-binding region. Catalyzes monoubiquitination of 'Lys-13' and 'Lys-15' of nucleosomal histone H2A (H2AK13Ub and H2AK15Ub, respectively). This chain is E3 ubiquitin-protein ligase RNF168, found in Rattus norvegicus (Rat).